Consider the following 646-residue polypeptide: Heat shock 70 kDa protein (646 aa).

Gly residues predominate over residues 613–632 (GGAPGGMPGAAPGGFPGGAP). Residues 613-646 (GGAPGGMPGAAPGGFPGGAPGSNDNEGPTVEEVD) are disordered.

The protein belongs to the heat shock protein 70 family.

In Neurospora crassa (strain ATCC 24698 / 74-OR23-1A / CBS 708.71 / DSM 1257 / FGSC 987), this protein is Heat shock 70 kDa protein (hsps-1).